The following is a 418-amino-acid chain: Putative ion-transport protein YfeO (418 aa).

12 helical membrane-spanning segments follow: residues 10-30 (LLLSLPAVAIGIASSLILIVV), 54-74 (DSPLWIIGVLTLTGIAVGLVI), 99-119 (ALPGLIVALILGLAGGVSLGP), 120-140 (EHPIMTVNIALAVAIGARLLP), 149-169 (ILASAGTIGALFGTPVAAALI), 186-206 (LFAPLMAAAAGALTTGLFFHP), 223-243 (ILSGAIVAAIAIAAGMVAVWC), 258-278 (VLVLGIGGFILGILGVIGGPV), 300-320 (DYFLLAVIKLAALVVAAASGF), 322-342 (GGRIFPAVFVGVALGLMLHEH), 343-363 (VPAVPAAITVSCAILGIVLVV), and 371-391 (LFMAAVVVPNTTLLPLLCIVM).

This sequence belongs to the chloride channel (TC 2.A.49) family.

It is found in the cell membrane. The sequence is that of Putative ion-transport protein YfeO from Escherichia coli O139:H28 (strain E24377A / ETEC).